A 198-amino-acid chain; its full sequence is FMN-dependent NADH:quinone oxidoreductase (198 aa).

Serine 10 is an FMN binding site.

Belongs to the azoreductase type 1 family. Homodimer. The cofactor is FMN.

It carries out the reaction 2 a quinone + NADH + H(+) = 2 a 1,4-benzosemiquinone + NAD(+). The enzyme catalyses N,N-dimethyl-1,4-phenylenediamine + anthranilate + 2 NAD(+) = 2-(4-dimethylaminophenyl)diazenylbenzoate + 2 NADH + 2 H(+). In terms of biological role, quinone reductase that provides resistance to thiol-specific stress caused by electrophilic quinones. Its function is as follows. Also exhibits azoreductase activity. Catalyzes the reductive cleavage of the azo bond in aromatic azo compounds to the corresponding amines. The sequence is that of FMN-dependent NADH:quinone oxidoreductase from Paraburkholderia phymatum (strain DSM 17167 / CIP 108236 / LMG 21445 / STM815) (Burkholderia phymatum).